We begin with the raw amino-acid sequence, 218 residues long: Octanoyltransferase (218 aa).

The BPL/LPL catalytic domain maps to 45 to 218; it reads AGTADELWLL…TDALQRAIYS (174 aa). Substrate-binding positions include 84–91, 151–153, and 164–166; these read RGGQITYH, ALG, and GLA. Cys182 (acyl-thioester intermediate) is an active-site residue.

The protein belongs to the LipB family.

It localises to the cytoplasm. The enzyme catalyses octanoyl-[ACP] + L-lysyl-[protein] = N(6)-octanoyl-L-lysyl-[protein] + holo-[ACP] + H(+). It participates in protein modification; protein lipoylation via endogenous pathway; protein N(6)-(lipoyl)lysine from octanoyl-[acyl-carrier-protein]: step 1/2. Catalyzes the transfer of endogenously produced octanoic acid from octanoyl-acyl-carrier-protein onto the lipoyl domains of lipoate-dependent enzymes. Lipoyl-ACP can also act as a substrate although octanoyl-ACP is likely to be the physiological substrate. The protein is Octanoyltransferase of Thiobacillus denitrificans (strain ATCC 25259 / T1).